Consider the following 457-residue polypeptide: Transcription termination factor Rho (457 aa).

Residues Met-1–Asp-23 form a disordered region. Positions Leu-77–Asp-152 constitute a Rho RNA-BD domain. ATP is bound by residues Gly-200 to Ala-205, Arg-212 to Val-217, and Arg-243.

The protein belongs to the Rho family. Homohexamer. The homohexamer assembles into an open ring structure.

In terms of biological role, facilitates transcription termination by a mechanism that involves Rho binding to the nascent RNA, activation of Rho's RNA-dependent ATPase activity, and release of the mRNA from the DNA template. This chain is Transcription termination factor Rho, found in Rickettsia prowazekii (strain Madrid E).